A 191-amino-acid chain; its full sequence is dTTP/UTP pyrophosphatase (191 aa).

D64 serves as the catalytic Proton acceptor.

It belongs to the Maf family. YhdE subfamily. It depends on a divalent metal cation as a cofactor.

The protein resides in the cytoplasm. The enzyme catalyses dTTP + H2O = dTMP + diphosphate + H(+). It carries out the reaction UTP + H2O = UMP + diphosphate + H(+). In terms of biological role, nucleoside triphosphate pyrophosphatase that hydrolyzes dTTP and UTP. May have a dual role in cell division arrest and in preventing the incorporation of modified nucleotides into cellular nucleic acids. This Thermosipho africanus (strain TCF52B) protein is dTTP/UTP pyrophosphatase.